The primary structure comprises 378 residues: MKILVDENMPYARELFSRLGEVKAVPGRPIPVAELDDADALMVRSVTKVNETLLAGKGIKFVGTATAGTDHVDDAWLAKAGIGFSAAPGCNAIAVVEYVFSSLLMLGERDGFALQDRTVGIVGVGNVGGRLQKRLEAMGIRTLLCDPPRADRGDEGDFRSLDELVEHADVITFHTPLFKDGAYKTFHLADETLIRRLKPGAILINACRGPVVDNAALLKCLEEGQNLSVVLDVWEPEPDLNVALLNRVDVATAHIAGYTLEGKARGTTQVFEAYSAFIGNAQQVALDTLLPAPEFGRITLHGPLDESSLKRLVHLVYDVRRDDALLRKVAGIPGEFDKLRKNYLERREWSSLYVICDDADAAALLNNLGFNAVHNPAR.

Residues Ser45 and Thr66 each coordinate substrate. NAD(+)-binding residues include Asp146 and Thr175. Residue Arg208 is part of the active site. An NAD(+)-binding site is contributed by Asp232. Glu237 is an active-site residue. His254 acts as the Proton donor in catalysis. An NAD(+)-binding site is contributed by Gly257. Tyr258 is a binding site for substrate.

It belongs to the D-isomer specific 2-hydroxyacid dehydrogenase family. PdxB subfamily. As to quaternary structure, homodimer.

The protein localises to the cytoplasm. It catalyses the reaction 4-phospho-D-erythronate + NAD(+) = (R)-3-hydroxy-2-oxo-4-phosphooxybutanoate + NADH + H(+). The protein operates within cofactor biosynthesis; pyridoxine 5'-phosphate biosynthesis; pyridoxine 5'-phosphate from D-erythrose 4-phosphate: step 2/5. Catalyzes the oxidation of erythronate-4-phosphate to 3-hydroxy-2-oxo-4-phosphonooxybutanoate. The sequence is that of Erythronate-4-phosphate dehydrogenase from Enterobacter sp. (strain 638).